A 366-amino-acid chain; its full sequence is Leucine-rich repeat-containing protein 58 (366 aa).

At serine 19 the chain carries Phosphoserine. LRR repeat units lie at residues 40-61 (ALLR…LGGG), 64-86 (HLQL…LTLS), 87-108 (GLRT…PKGL), 116-138 (SLQV…LELR), 139-161 (ALQT…ENLR), 162-184 (SLEC…ANLP), 185-206 (SLNY…LSQL), 208-229 (SLRS…ILNL), and 231-251 (HLEE…RDLT). Low complexity predominate over residues 337 to 346 (ASHSSTSQSE). The tract at residues 337–356 (ASHSSTSQSESDSEDEASVA) is disordered.

This is Leucine-rich repeat-containing protein 58 (Lrrc58) from Mus musculus (Mouse).